The primary structure comprises 490 residues: Serine hydroxymethyltransferase, mitochondrial (490 aa).

The transit peptide at 1-20 (MFPRASALAKCMATVHRRGL) directs the protein to the mitochondrion. Position 265 is an N6-(pyridoxal phosphate)lysine (lysine 265).

The protein belongs to the SHMT family. As to quaternary structure, homotetramer. Interacts with NAP1. Pyridoxal 5'-phosphate is required as a cofactor.

The protein resides in the mitochondrion. The catalysed reaction is (6R)-5,10-methylene-5,6,7,8-tetrahydrofolate + glycine + H2O = (6S)-5,6,7,8-tetrahydrofolate + L-serine. The protein operates within one-carbon metabolism; tetrahydrofolate interconversion. Interconversion of serine and glycine. This is Serine hydroxymethyltransferase, mitochondrial (SHM1) from Saccharomyces cerevisiae (strain ATCC 204508 / S288c) (Baker's yeast).